The chain runs to 298 residues: Probable tRNA(His) guanylyltransferase (298 aa).

Mg(2+) contacts are provided by Asp58, Gly59, and Asp105. GTP-binding positions include Asp58–His63 and Ser104–Asp105.

This sequence belongs to the tRNA(His) guanylyltransferase family. Homotetramer. Interacts with MFN1 and MFN2; functions as a guanyl-nucleotide exchange factor/GEF for MFN2 and also probably MFN1. Requires Mg(2+) as cofactor.

It localises to the cytoplasm. The protein resides in the mitochondrion. The enzyme catalyses a 5'-end ribonucleotide-tRNA(His) + GTP + ATP + H2O = a 5'-end phospho-guanosine-ribonucleotide-tRNA(His) + AMP + 2 diphosphate + H(+). In terms of biological role, adds a GMP to the 5'-end of tRNA(His) after transcription and RNase P cleavage. This step is essential for proper recognition of the tRNA and for the fidelity of protein synthesis. Also functions as a guanyl-nucleotide exchange factor/GEF for the MFN1 and MFN2 mitofusins thereby regulating mitochondrial fusion. By regulating both mitochondrial dynamics and bioenergetic function, it contributes to cell survival following oxidative stress. In Mus musculus (Mouse), this protein is Probable tRNA(His) guanylyltransferase (Thg1l).